We begin with the raw amino-acid sequence, 392 residues long: Queuine tRNA-ribosyltransferase (392 aa).

Catalysis depends on Asp93, which acts as the Proton acceptor. Residues 93 to 97 (DSGGY), Asp147, Gln189, and Gly216 contribute to the substrate site. The segment at 247–253 (GVGAPED) is RNA binding. Asp266 acts as the Nucleophile in catalysis. The interval 271–275 (TRVAR) is RNA binding; important for wobble base 34 recognition. Zn(2+) contacts are provided by Cys304, Cys306, Cys309, and His335.

It belongs to the queuine tRNA-ribosyltransferase family. In terms of assembly, homodimer. Within each dimer, one monomer is responsible for RNA recognition and catalysis, while the other monomer binds to the replacement base PreQ1. Requires Zn(2+) as cofactor.

It catalyses the reaction 7-aminomethyl-7-carbaguanine + guanosine(34) in tRNA = 7-aminomethyl-7-carbaguanosine(34) in tRNA + guanine. It functions in the pathway tRNA modification; tRNA-queuosine biosynthesis. Functionally, catalyzes the base-exchange of a guanine (G) residue with the queuine precursor 7-aminomethyl-7-deazaguanine (PreQ1) at position 34 (anticodon wobble position) in tRNAs with GU(N) anticodons (tRNA-Asp, -Asn, -His and -Tyr). Catalysis occurs through a double-displacement mechanism. The nucleophile active site attacks the C1' of nucleotide 34 to detach the guanine base from the RNA, forming a covalent enzyme-RNA intermediate. The proton acceptor active site deprotonates the incoming PreQ1, allowing a nucleophilic attack on the C1' of the ribose to form the product. After dissociation, two additional enzymatic reactions on the tRNA convert PreQ1 to queuine (Q), resulting in the hypermodified nucleoside queuosine (7-(((4,5-cis-dihydroxy-2-cyclopenten-1-yl)amino)methyl)-7-deazaguanosine). In Dehalococcoides mccartyi (strain CBDB1), this protein is Queuine tRNA-ribosyltransferase.